Here is a 230-residue protein sequence, read N- to C-terminus: Ion-translocating oxidoreductase complex subunit E (230 aa).

Helical transmembrane passes span 22–42, 63–83, 86–106, 125–145, and 182–202; these read LLGLCPLLAVTSTATNALGLG, TPAEIRIPIYVMIIASVVSAV, LINAYAFGLYQSLGIFIPLIV, WLSALDGFSIGMGATGAMFVL, and PFLLAMLPPGAFIGLGLMLAV.

It belongs to the NqrDE/RnfAE family. The complex is composed of six subunits: RsxA, RsxB, RsxC, RsxD, RsxE and RsxG.

Its subcellular location is the cell inner membrane. In terms of biological role, part of a membrane-bound complex that couples electron transfer with translocation of ions across the membrane. Required to maintain the reduced state of SoxR. This chain is Ion-translocating oxidoreductase complex subunit E, found in Salmonella paratyphi A (strain ATCC 9150 / SARB42).